The following is a 274-amino-acid chain: Large ribosomal subunit protein uL2cz/uL2cy (274 aa).

Disordered regions lie at residues methionine 1–valine 22 and proline 225–lysine 274.

This sequence belongs to the universal ribosomal protein uL2 family. Part of the 50S ribosomal subunit.

It is found in the plastid. The protein resides in the chloroplast. In Nasturtium officinale (Watercress), this protein is Large ribosomal subunit protein uL2cz/uL2cy (rpl2-A).